The chain runs to 539 residues: Nucleobase-ascorbate transporter 8 (539 aa).

Residues 1-20 are disordered; sequence MAGDGVENAKPPQKQEDLQP. 12 consecutive transmembrane segments (helical) span residues 44-64, 79-99, 101-121, 141-161, 167-187, 189-209, 229-249, 295-315, 368-388, 399-421, 433-453, and 470-490; these read ILLG…IPTM, LIQT…FFGT, LPAV…IVLA, IQGA…SGLW, FLSP…LYEQ, FPML…LVIF, FAVI…TIGG, IFAM…TYIA, VGSR…SILG, APIV…LSLI, FILG…YQYT, and NIIN…AFFL.

Belongs to the nucleobase:cation symporter-2 (NCS2) (TC 2.A.40) family. As to expression, highly expressed in ovules, endosperm and embryo.

Its subcellular location is the cell membrane. The polypeptide is Nucleobase-ascorbate transporter 8 (NAT8) (Arabidopsis thaliana (Mouse-ear cress)).